A 667-amino-acid chain; its full sequence is Glycine--tRNA ligase beta subunit (667 aa).

The protein belongs to the class-II aminoacyl-tRNA synthetase family. Tetramer of two alpha and two beta subunits.

It localises to the cytoplasm. The catalysed reaction is tRNA(Gly) + glycine + ATP = glycyl-tRNA(Gly) + AMP + diphosphate. The polypeptide is Glycine--tRNA ligase beta subunit (Rickettsia canadensis (strain McKiel)).